Here is a 354-residue protein sequence, read N- to C-terminus: Elongation factor Ts (354 aa).

Residues 81–84 (TDFV) form an involved in Mg(2+) ion dislocation from EF-Tu region.

It belongs to the EF-Ts family.

The protein resides in the cytoplasm. Functionally, associates with the EF-Tu.GDP complex and induces the exchange of GDP to GTP. It remains bound to the aminoacyl-tRNA.EF-Tu.GTP complex up to the GTP hydrolysis stage on the ribosome. The polypeptide is Elongation factor Ts (Campylobacter concisus (strain 13826)).